The chain runs to 288 residues: Probable sulfate transport system permease protein cysT (288 aa).

Transmembrane regions (helical) follow at residues 2-22, 28-48, 77-97, 112-132, 149-169, 196-218, 227-247, and 257-277; these read IPLF…KFRF, LVLA…IFFL, FLTA…LAWV, TVDL…MTVF, IVFN…PFVV, TTFW…TLGF, SIVL…VLLF, and SATI…FFIN. The ABC transmembrane type-1 domain maps to 73 to 277; that stretch reads YGFTFLTALL…ISFTALFFIN (205 aa).

It belongs to the binding-protein-dependent transport system permease family. CysTW subfamily.

Its subcellular location is the plastid. It is found in the chloroplast membrane. In terms of biological role, part of the ABC transporter complex cysAWTP (TC 3.A.1.6.1) involved in sulfate/thiosulfate import. Probably responsible for the translocation of the substrate across the membrane. In Marchantia polymorpha (Common liverwort), this protein is Probable sulfate transport system permease protein cysT (cysT).